Consider the following 462-residue polypeptide: Kremen protein 2 (462 aa).

A signal peptide spans 1-25 (MGTQALQGFLFLLFLPLLQPRGASA). The Extracellular portion of the chain corresponds to 26 to 364 (GSLHSPGLSE…SPRPGAPPAA (339 aa)). One can recognise a Kringle domain in the interval 35–119 (ECFQVNGADY…YWRYCDIPSC (85 aa)). 3 disulfide bridges follow: cysteine 36–cysteine 119, cysteine 60–cysteine 100, and cysteine 89–cysteine 114. A glycan (N-linked (GlcNAc...) asparagine) is linked at asparagine 49. Residues 121–215 (MPGYLGCFVD…DGRLGVYEVS (95 aa)) enclose the WSC domain. Cysteine 219 and cysteine 245 are oxidised to a cystine. The CUB domain maps to 219–326 (CQGNWTAPQG…QGFALTYRGL (108 aa)). N-linked (GlcNAc...) asparagine glycans are attached at residues asparagine 222, asparagine 244, and asparagine 351. The interval 328-352 (DAAEDPEAPEGSAQTPAAPLDGANV) is disordered. Residues 365–387 (IGARVFSTVTAVSVLLLLLLGLL) traverse the membrane as a helical segment. Residues 388–462 (RPLRRRSCLL…SSLRSLISAL (75 aa)) lie on the Cytoplasmic side of the membrane.

As to quaternary structure, interacts with ERLEC1. Forms a ternary complex with DKK1 and LRP6.

The protein resides in the membrane. Functionally, receptor for Dickkopf proteins. Cooperates with DKK1/2 to inhibit Wnt/beta-catenin signaling by promoting the endocytosis of Wnt receptors LRP5 and LRP6. Plays a role in limb development; attenuates Wnt signaling in the developing limb to allow normal limb patterning and can also negatively regulate bone formation. This is Kremen protein 2 (KREMEN2) from Homo sapiens (Human).